A 125-amino-acid polypeptide reads, in one-letter code: Large ribosomal subunit protein bL12 (125 aa).

This sequence belongs to the bacterial ribosomal protein bL12 family. As to quaternary structure, homodimer. Part of the ribosomal stalk of the 50S ribosomal subunit. Forms a multimeric L10(L12)X complex, where L10 forms an elongated spine to which 2 to 4 L12 dimers bind in a sequential fashion. Binds GTP-bound translation factors.

Forms part of the ribosomal stalk which helps the ribosome interact with GTP-bound translation factors. Is thus essential for accurate translation. The protein is Large ribosomal subunit protein bL12 of Azoarcus sp. (strain BH72).